The chain runs to 347 residues: tRNA N6-adenosine threonylcarbamoyltransferase (347 aa).

Fe cation contacts are provided by H111 and H115. Residues 134–138, D167, G180, and N276 contribute to the substrate site; that span reads LVSGG. D304 provides a ligand contact to Fe cation.

This sequence belongs to the KAE1 / TsaD family. Requires Fe(2+) as cofactor.

The protein resides in the cytoplasm. It carries out the reaction L-threonylcarbamoyladenylate + adenosine(37) in tRNA = N(6)-L-threonylcarbamoyladenosine(37) in tRNA + AMP + H(+). Functionally, required for the formation of a threonylcarbamoyl group on adenosine at position 37 (t(6)A37) in tRNAs that read codons beginning with adenine. Is involved in the transfer of the threonylcarbamoyl moiety of threonylcarbamoyl-AMP (TC-AMP) to the N6 group of A37, together with TsaE and TsaB. TsaD likely plays a direct catalytic role in this reaction. This Nitrosospira multiformis (strain ATCC 25196 / NCIMB 11849 / C 71) protein is tRNA N6-adenosine threonylcarbamoyltransferase.